Consider the following 126-residue polypeptide: Acidic phospholipase A2 4 (126 aa).

Residue Ser1 is a signal peptide. A propeptide spanning residues 2-7 (NRPMPL) is cleaved from the precursor. Disulfide bonds link Cys18/Cys78, Cys33/Cys125, Cys35/Cys51, Cys50/Cys106, Cys57/Cys99, Cys67/Cys92, and Cys85/Cys97. The Ca(2+) site is built by Tyr34, Gly36, and Gly38. Residue His54 is part of the active site. Ca(2+) is bound at residue Asp55. Asp100 is a catalytic residue.

It belongs to the phospholipase A2 family. Group I subfamily. D49 sub-subfamily. In terms of assembly, monomer. The cofactor is Ca(2+). As to expression, expressed by the venom gland.

The protein localises to the secreted. The catalysed reaction is a 1,2-diacyl-sn-glycero-3-phosphocholine + H2O = a 1-acyl-sn-glycero-3-phosphocholine + a fatty acid + H(+). Functionally, snake venom phospholipase A2 (PLA2) that exhibits strong anticoagulant activity, which is not due to the catalytic activity. PLA2 catalyzes the calcium-dependent hydrolysis of the 2-acyl groups in 3-sn-phosphoglycerides. The sequence is that of Acidic phospholipase A2 4 from Naja sagittifera (Andaman cobra).